We begin with the raw amino-acid sequence, 416 residues long: Alpha-1-antiproteinase (416 aa).

A signal peptide spans 1-24 (MALSITRGLLLLAALCCLAPISLA). Asn68, Asn105, Asn143, and Asn269 each carry an N-linked (GlcNAc...) asparagine glycan. The segment at 371-390 (GSTFLEAIPMSLPPDVEFNR) is RCL. The residue at position 381 (Ser381) is a Phosphoserine.

Belongs to the serpin family. Interacts with CELA2A. Interacts with ERGIC3 and LMAN1/ERGIC53. Interacts with PRSS1/Trypsin. Plasma.

The protein resides in the secreted. Inhibitor of serine proteases. Its primary target is elastase, but it also has a moderate affinity for plasmin and thrombin. Inhibits trypsin, chymotrypsin and plasminogen activator. The polypeptide is Alpha-1-antiproteinase (SERPINA1) (Bos taurus (Bovine)).